A 627-amino-acid polypeptide reads, in one-letter code: uncharacterized protein (627 aa).

This is an uncharacterized protein from Caenorhabditis elegans.